The following is a 244-amino-acid chain: 5-oxoprolinase subunit A (244 aa).

It belongs to the LamB/PxpA family. Forms a complex composed of PxpA, PxpB and PxpC.

It catalyses the reaction 5-oxo-L-proline + ATP + 2 H2O = L-glutamate + ADP + phosphate + H(+). Catalyzes the cleavage of 5-oxoproline to form L-glutamate coupled to the hydrolysis of ATP to ADP and inorganic phosphate. This is 5-oxoprolinase subunit A from Salmonella choleraesuis (strain SC-B67).